The primary structure comprises 713 residues: Forkhead box protein P2 (713 aa).

Polar residues predominate over residues 1 to 28 (MMQESVTETISNSSMNQNGMSTLSSQLD). Disordered regions lie at residues 1-44 (MMQE…SSEV) and 279-337 (DNGI…TGAS). Low complexity predominate over residues 290 to 303 (TTNNSSSTTSSTTS). Positions 313-322 (SIVNGQSSVL) are enriched in polar residues. Residues 324–335 (ARRDSSSHEETG) show a composition bias toward basic and acidic residues. A C2H2-type zinc finger spans residues 344 to 369 (GVCKWPGCESICEDFGQFLKHLNNEH). The leucine-zipper stretch occupies residues 386–407 (VQQLEIQLSKERERLQAMMTHL). Residues 420-424 (PLNLV) are CTBP1-binding. Residues 436–457 (TSPQSLPQTPTTPTAPVTPITQ) are compositionally biased toward low complexity. Positions 436–463 (TSPQSLPQTPTTPTAPVTPITQGPSVIT) are disordered. The segment at residues 502-592 (RPPFTYATLI…SQKITGSPTL (91 aa)) is a DNA-binding region (fork-head). Disordered regions lie at residues 647-666 (LDHIDSNGNSSPGCSPQPHI) and 676-713 (VIAEDEDCPMSLVTTANHSPELEDDREIEEEPLSEDLE). Residues 697–713 (LEDDREIEEEPLSEDLE) are compositionally biased toward acidic residues.

In terms of assembly, forms homodimers and heterodimers with FOXP1 and FOXP4. Dimerization is required for DNA-binding. Interacts with CTBP1. Interacts with FOXP1. Interacts with TBR1. Interacts with ZMYM2.

The protein resides in the nucleus. Its function is as follows. Transcriptional repressor that may play a role in the specification and differentiation of lung epithelium. May also play a role in developing neural, gastrointestinal and cardiovascular tissues. Can act with CTBP1 to synergistically repress transcription but CTPBP1 is not essential. Plays a role in synapse formation by regulating SRPX2 levels. This chain is Forkhead box protein P2 (FOXP2), found in Pongo pygmaeus (Bornean orangutan).